The sequence spans 201 residues: Small ribosomal subunit protein uS4c (201 aa).

Positions 1–14 (MSRYRGPRFKKIRR) are enriched in basic residues. Positions 1-44 (MSRYRGPRFKKIRRLGALPGLTSKRPRAGSDPRNQSRSGKKSQY) are disordered. Residues 89–152 (MRLDNTLFRL…NSRTLVQNLL (64 aa)) form the S4 RNA-binding domain.

The protein belongs to the universal ribosomal protein uS4 family. As to quaternary structure, part of the 30S ribosomal subunit. Contacts protein S5. The interaction surface between S4 and S5 is involved in control of translational fidelity.

The protein localises to the plastid. Its subcellular location is the chloroplast. One of the primary rRNA binding proteins, it binds directly to 16S rRNA where it nucleates assembly of the body of the 30S subunit. Functionally, with S5 and S12 plays an important role in translational accuracy. The polypeptide is Small ribosomal subunit protein uS4c (rps4) (Draba nemorosa (Woodland whitlowgrass)).